We begin with the raw amino-acid sequence, 199 residues long: Recombination protein RecR (199 aa).

The C4-type zinc-finger motif lies at 58 to 73 (CKKCFNLTSEEECDIC). Residues 81–175 (NIICVVAETK…KVTRIAYGLP (95 aa)) enclose the Toprim domain.

Belongs to the RecR family.

Its function is as follows. May play a role in DNA repair. It seems to be involved in an RecBC-independent recombinational process of DNA repair. It may act with RecF and RecO. This Prochlorococcus marinus (strain MIT 9515) protein is Recombination protein RecR.